The sequence spans 80 residues: Protein UL148B (80 aa).

A helical membrane pass occupies residues 10 to 30 (AICVGLVMGVTVIASCALLVF).

The protein localises to the host membrane. This chain is Protein UL148B (UL148B), found in Homo sapiens (Human).